Here is a 352-residue protein sequence, read N- to C-terminus: Fructose-1,6-bisphosphatase class 1 (352 aa).

Mg(2+)-binding residues include glutamate 111, aspartate 133, isoleucine 135, and aspartate 136. Residues 136–139 (DGSS), asparagine 228, tyrosine 256, and lysine 286 contribute to the substrate site. Residue glutamate 292 participates in Mg(2+) binding.

This sequence belongs to the FBPase class 1 family. In terms of assembly, homotetramer. The cofactor is Mg(2+).

The protein resides in the cytoplasm. The enzyme catalyses beta-D-fructose 1,6-bisphosphate + H2O = beta-D-fructose 6-phosphate + phosphate. It functions in the pathway carbohydrate biosynthesis; Calvin cycle. This chain is Fructose-1,6-bisphosphatase class 1, found in Crocosphaera subtropica (strain ATCC 51142 / BH68) (Cyanothece sp. (strain ATCC 51142)).